A 613-amino-acid polypeptide reads, in one-letter code: UBX domain-containing protein 3 (613 aa).

Disordered stretches follow at residues 67–223 and 453–472; these read PAAA…PINP and MNEQ…RNQQ. Positions 68 to 82 are enriched in low complexity; the sequence is AAASGRNAGASSSSR. Basic residues predominate over residues 137–149; that stretch reads THHRGAAIPRQKR. Residues 158-169 show a composition bias toward low complexity; sequence SSSGSSSASFSS. Residues 452 to 517 are a coiled coil; that stretch reads RMNEQSERRE…EEEECVRRQT (66 aa). A UBX domain is found at 531 to 610; the sequence is PLAEIINVKF…KWPAREQIFV (80 aa). The short motif at 582–584 is the Interaction with cdc-48 element; the sequence is FPK.

Forms a complex composed of ubxn-3, cdc-48.1, ufd-1 and npl-4.1. Forms a complex composed of ubxn-3, cdc-48.1 and/or cdc-48.2 and substrate cdt-1. Interacts (via FPK motif) with cdc-48.1 (via N-terminus) and cdc-48.2 (via N-terminus). Interacts (via N-terminus) with cdt-1 and ubiquitinated protein substrates; the interaction is cdc-48-independent. May interact with npl-4.1. As to expression, expressed in the germline (at protein level). Expressed in spermatocytes but not in mature sperm (at protein level). Expressed in the spermatheca and nerve cells.

Its subcellular location is the nucleus. It localises to the cytoplasm. It is found in the perinuclear region. The protein localises to the chromosome. Its function is as follows. Ubiquitin-binding protein which acts as an adapter for ATPase cdc-48.1 and/or cdc-48.2, conferring substrate specificity. Together with ubxn-1 and ubxn-2, plays a role in hermaphrodite spermatogenesis probably by promoting the degradation of sex determination terminal factor tra-1. During mitosis, ensures the degradation of DNA licensing factor cdt-1 and the disassembly of the DNA replication CMG helicase complex by promoting the dissociation from chromatin of several of its components including cdc-45 and sld-5. The polypeptide is UBX domain-containing protein 3 (Caenorhabditis elegans).